A 97-amino-acid polypeptide reads, in one-letter code: Essential MCU regulator, mitochondrial (97 aa).

The N-terminal 35 residues, 1-35 (MIVPRLALPISLALQRVSRRVAEHPHNLRILQRHM), are a transit peptide targeting the mitochondrion. A helical membrane pass occupies residues 53–73 (PFGLLAIFCAVIPGLFVGATI).

This sequence belongs to the SMDT1/EMRE family.

It localises to the mitochondrion inner membrane. Essential regulatory subunit of the mitochondrial calcium uniporter MCU channel, a protein that mediates calcium uptake into mitochondria. The polypeptide is Essential MCU regulator, mitochondrial (Drosophila melanogaster (Fruit fly)).